Consider the following 284-residue polypeptide: L-ribulose-5-phosphate 3-epimerase UlaE (284 aa).

This sequence belongs to the L-ribulose-5-phosphate 3-epimerase family.

The enzyme catalyses L-ribulose 5-phosphate = L-xylulose 5-phosphate. It participates in cofactor degradation; L-ascorbate degradation; D-xylulose 5-phosphate from L-ascorbate: step 3/4. Functionally, catalyzes the isomerization of L-xylulose-5-phosphate to L-ribulose-5-phosphate. Is involved in the anaerobic L-ascorbate utilization. The protein is L-ribulose-5-phosphate 3-epimerase UlaE of Salmonella choleraesuis (strain SC-B67).